The following is a 360-amino-acid chain: Membrane-bound lytic murein transglycosylase C (360 aa).

Residues 1 to 16 (MKKLLALAVIAPLLIS) form the signal peptide. Cysteine 17 carries the N-palmitoyl cysteine lipid modification. Cysteine 17 carries the S-diacylglycerol cysteine lipid modification.

Belongs to the transglycosylase Slt family.

It is found in the cell outer membrane. It carries out the reaction Exolytic cleavage of the (1-&gt;4)-beta-glycosidic linkage between N-acetylmuramic acid (MurNAc) and N-acetylglucosamine (GlcNAc) residues in peptidoglycan, from either the reducing or the non-reducing ends of the peptidoglycan chains, with concomitant formation of a 1,6-anhydrobond in the MurNAc residue.. Murein-degrading enzyme. May play a role in recycling of muropeptides during cell elongation and/or cell division. In Salmonella typhi, this protein is Membrane-bound lytic murein transglycosylase C.